The following is a 541-amino-acid chain: Chaperonin GroEL (541 aa).

Residues Thr-29–Pro-32, Asp-86–Thr-90, Gly-413, Asp-477–Leu-479, and Asp-493 each bind ATP.

The protein belongs to the chaperonin (HSP60) family. In terms of assembly, forms a cylinder of 14 subunits composed of two heptameric rings stacked back-to-back. Interacts with the co-chaperonin GroES.

Its subcellular location is the cytoplasm. It catalyses the reaction ATP + H2O + a folded polypeptide = ADP + phosphate + an unfolded polypeptide.. Functionally, together with its co-chaperonin GroES, plays an essential role in assisting protein folding. The GroEL-GroES system forms a nano-cage that allows encapsulation of the non-native substrate proteins and provides a physical environment optimized to promote and accelerate protein folding. This is Chaperonin GroEL from Clostridium botulinum (strain ATCC 19397 / Type A).